The primary structure comprises 145 residues: Acidic phospholipase A2 (145 aa).

Residues 1–19 (MNPAHLLILSAVCVSLLGA) form the signal peptide. Positions 20–27 (ANVPPQHL) are excised as a propeptide. 7 disulfides stabilise this stretch: Cys38–Cys97, Cys52–Cys144, Cys54–Cys70, Cys69–Cys125, Cys76–Cys118, Cys86–Cys111, and Cys104–Cys116. Residues Tyr53, Gly55, and Gly57 each coordinate Ca(2+). His73 is an active-site residue. Position 74 (Asp74) interacts with Ca(2+). Residue Asp119 is part of the active site.

It belongs to the phospholipase A2 family. Group I subfamily. D49 sub-subfamily. Ca(2+) is required as a cofactor. Expressed by the venom gland.

The protein localises to the secreted. The catalysed reaction is a 1,2-diacyl-sn-glycero-3-phosphocholine + H2O = a 1-acyl-sn-glycero-3-phosphocholine + a fatty acid + H(+). Functionally, PLA2 catalyzes the calcium-dependent hydrolysis of the 2-acyl groups in 3-sn-phosphoglycerides. This Bungarus multicinctus (Many-banded krait) protein is Acidic phospholipase A2.